Consider the following 31-residue polypeptide: Photosystem II reaction center protein T (31 aa).

A helical transmembrane segment spans residues 3 to 23 (ALVYTFLLVGTLGIIFFAIFF).

The protein belongs to the PsbT family. In terms of assembly, PSII is composed of 1 copy each of membrane proteins PsbA, PsbB, PsbC, PsbD, PsbE, PsbF, PsbH, PsbI, PsbJ, PsbK, PsbL, PsbM, PsbT, PsbY, PsbZ, Psb30/Ycf12, at least 3 peripheral proteins of the oxygen-evolving complex and a large number of cofactors. It forms dimeric complexes.

Its subcellular location is the plastid. It localises to the chloroplast thylakoid membrane. Functionally, found at the monomer-monomer interface of the photosystem II (PS II) dimer, plays a role in assembly and dimerization of PSII. PSII is a light-driven water plastoquinone oxidoreductase, using light energy to abstract electrons from H(2)O, generating a proton gradient subsequently used for ATP formation. This chain is Photosystem II reaction center protein T, found in Chlorella vulgaris (Green alga).